Here is a 192-residue protein sequence, read N- to C-terminus: Secreted and transmembrane protein 1A (192 aa).

Residues 1–27 (MMTCPSVPAIPTLWLFSILLLVVSLNA) form the signal peptide. The Extracellular segment spans residues 28–165 (QNKSWDNPIC…SSPIEGKPGT (138 aa)). N29, N55, N84, and N127 each carry an N-linked (GlcNAc...) asparagine glycan. Residues 166-186 (LVGVITVIFILGVAGFITFIY) traverse the membrane as a helical segment. Over 187-192 (YRHRRS) the chain is Cytoplasmic.

The protein belongs to the SECTM family.

The protein resides in the cell membrane. It is found in the secreted. The sequence is that of Secreted and transmembrane protein 1A from Mus musculus (Mouse).